Consider the following 516-residue polypeptide: Golgi-associated kinase 1B (516 aa).

Residues 1–37 (MTCPDKLGQLINWFVCSLCAPRVCKLWSSRRPRTRRN) lie on the Cytoplasmic side of the membrane. A helical; Signal-anchor for type II membrane protein transmembrane segment spans residues 38-55 (LLLGTACAIYLGFLVSQV). Over 56-516 (GKGSFQHGQA…HGARVLPMNE (461 aa)) the chain is Extracellular. Asn-286 carries an N-linked (GlcNAc...) asparagine glycan.

It belongs to the GASK family.

Its subcellular location is the golgi apparatus membrane. The protein is Golgi-associated kinase 1B of Rattus norvegicus (Rat).